Consider the following 82-residue polypeptide: ATP synthase subunit c, chloroplastic (82 aa).

2 helical membrane-spanning segments follow: residues 3–23 (PIISAASVIGAGLSIGLAAIG) and 57–77 (LAFMEALTIYGLVVALALLFA).

It belongs to the ATPase C chain family. F-type ATPases have 2 components, F(1) - the catalytic core - and F(0) - the membrane proton channel. F(1) has five subunits: alpha(3), beta(3), gamma(1), delta(1), epsilon(1). F(0) has four main subunits: a(1), b(1), b'(1) and c(10-14). The alpha and beta chains form an alternating ring which encloses part of the gamma chain. F(1) is attached to F(0) by a central stalk formed by the gamma and epsilon chains, while a peripheral stalk is formed by the delta, b and b' chains.

It is found in the plastid. The protein resides in the chloroplast thylakoid membrane. Its function is as follows. F(1)F(0) ATP synthase produces ATP from ADP in the presence of a proton or sodium gradient. F-type ATPases consist of two structural domains, F(1) containing the extramembraneous catalytic core and F(0) containing the membrane proton channel, linked together by a central stalk and a peripheral stalk. During catalysis, ATP synthesis in the catalytic domain of F(1) is coupled via a rotary mechanism of the central stalk subunits to proton translocation. In terms of biological role, key component of the F(0) channel; it plays a direct role in translocation across the membrane. A homomeric c-ring of between 10-14 subunits forms the central stalk rotor element with the F(1) delta and epsilon subunits. The protein is ATP synthase subunit c, chloroplastic of Phaeodactylum tricornutum (strain CCAP 1055/1).